Here is a 500-residue protein sequence, read N- to C-terminus: Probable cytosol aminopeptidase (500 aa).

Residues Lys-265 and Asp-270 each contribute to the Mn(2+) site. Lys-277 is an active-site residue. The Mn(2+) site is built by Asp-288, Asp-347, and Glu-349. The active site involves Arg-351.

It belongs to the peptidase M17 family. Requires Mn(2+) as cofactor.

It is found in the cytoplasm. The catalysed reaction is Release of an N-terminal amino acid, Xaa-|-Yaa-, in which Xaa is preferably Leu, but may be other amino acids including Pro although not Arg or Lys, and Yaa may be Pro. Amino acid amides and methyl esters are also readily hydrolyzed, but rates on arylamides are exceedingly low.. It carries out the reaction Release of an N-terminal amino acid, preferentially leucine, but not glutamic or aspartic acids.. Presumably involved in the processing and regular turnover of intracellular proteins. Catalyzes the removal of unsubstituted N-terminal amino acids from various peptides. The polypeptide is Probable cytosol aminopeptidase (Corynebacterium diphtheriae (strain ATCC 700971 / NCTC 13129 / Biotype gravis)).